Reading from the N-terminus, the 361-residue chain is tRNA-specific 2-thiouridylase MnmA (361 aa).

ATP contacts are provided by residues 9–16 and M35; that span reads GMSGGVDS. Residues 95–97 form an interaction with target base in tRNA region; sequence NPD. Residue C100 is the Nucleophile of the active site. A disulfide bond links C100 and C196. ATP is bound at residue G124. The segment at 146–148 is interaction with tRNA; it reads KDQ. The active-site Cysteine persulfide intermediate is the C196. The segment at 308 to 309 is interaction with tRNA; it reads RY.

Belongs to the MnmA/TRMU family.

It localises to the cytoplasm. It carries out the reaction S-sulfanyl-L-cysteinyl-[protein] + uridine(34) in tRNA + AH2 + ATP = 2-thiouridine(34) in tRNA + L-cysteinyl-[protein] + A + AMP + diphosphate + H(+). Its function is as follows. Catalyzes the 2-thiolation of uridine at the wobble position (U34) of tRNA, leading to the formation of s(2)U34. This Nitrosomonas eutropha (strain DSM 101675 / C91 / Nm57) protein is tRNA-specific 2-thiouridylase MnmA.